Consider the following 139-residue polypeptide: Small ribosomal subunit protein bS6 (139 aa).

The protein belongs to the bacterial ribosomal protein bS6 family.

Functionally, binds together with bS18 to 16S ribosomal RNA. The polypeptide is Small ribosomal subunit protein bS6 (Borreliella afzelii (strain PKo) (Borrelia afzelii)).